Consider the following 695-residue polypeptide: HIPL1 protein (695 aa).

An N-terminal signal peptide occupies residues Met1–Ala23. 15 N-linked (GlcNAc...) asparagine glycosylation sites follow: Asn37, Asn67, Asn107, Asn113, Asn128, Asn151, Asn175, Asn190, Asn208, Asn337, Asn429, Asn511, Asn527, Asn641, and Asn648. Ser665 carries the GPI-anchor amidated serine lipid modification. The propeptide at Ser666–Asn695 is removed in mature form.

This sequence belongs to the PQQ oxidoreductase GdhB family. Pyrroloquinoline quinone serves as cofactor.

It localises to the cell membrane. In Arabidopsis thaliana (Mouse-ear cress), this protein is HIPL1 protein (HIPL1).